Here is a 305-residue protein sequence, read N- to C-terminus: Phospho-N-acetylmuramoyl-pentapeptide-transferase (305 aa).

A run of 9 helical transmembrane segments spans residues 1 to 21, 46 to 66, 73 to 93, 113 to 133, 139 to 159, 174 to 194, 207 to 227, 233 to 253, and 282 to 302; these read MLMV…RASK, AGGV…YLSG, ELLI…DDWL, FPLQ…LASH, LGPV…VNAF, IIVL…VAVL, VFMG…AYIL, LLPI…IQVI, and VTIR…WLLG.

This sequence belongs to the glycosyltransferase 4 family. MraY subfamily. Mg(2+) is required as a cofactor.

It is found in the cell membrane. It catalyses the reaction UDP-N-acetyl-alpha-D-muramoyl-L-alanyl-gamma-D-glutamyl-meso-2,6-diaminopimeloyl-D-alanyl-D-alanine + di-trans,octa-cis-undecaprenyl phosphate = di-trans,octa-cis-undecaprenyl diphospho-N-acetyl-alpha-D-muramoyl-L-alanyl-D-glutamyl-meso-2,6-diaminopimeloyl-D-alanyl-D-alanine + UMP. Its pathway is cell wall biogenesis; peptidoglycan biosynthesis. Functionally, catalyzes the initial step of the lipid cycle reactions in the biosynthesis of the cell wall peptidoglycan: transfers peptidoglycan precursor phospho-MurNAc-pentapeptide from UDP-MurNAc-pentapeptide onto the lipid carrier undecaprenyl phosphate, yielding undecaprenyl-pyrophosphoryl-MurNAc-pentapeptide, known as lipid I. The chain is Phospho-N-acetylmuramoyl-pentapeptide-transferase from Deinococcus deserti (strain DSM 17065 / CIP 109153 / LMG 22923 / VCD115).